Reading from the N-terminus, the 247-residue chain is 14-3-3 protein gamma (247 aa).

It belongs to the 14-3-3 family. Homodimer, and heterodimer with other family members.

The protein resides in the cytoplasm. Adapter protein implicated in the regulation of a large spectrum of both general and specialized signaling pathways. Binds to a large number of partners, usually by recognition of a phosphoserine or phosphothreonine motif. Binding generally results in the modulation of the activity of the binding partner. This is 14-3-3 protein gamma (YWHAG) from Gallus gallus (Chicken).